Reading from the N-terminus, the 395-residue chain is Obg-like ATPase 1 (395 aa).

The OBG-type G domain occupies 22–280 (LKVGILGLPN…MPEDERQKYL (259 aa)). Residue 31–36 (NVGKST) coordinates ATP. Positions 35 and 55 each coordinate Mg(2+). Residue L228 participates in ATP binding. The region spanning 301-384 (QLEYFFTSGE…QDGDVIFFKF (84 aa)) is the TGS domain.

It belongs to the TRAFAC class OBG-HflX-like GTPase superfamily. OBG GTPase family. YchF/OLA1 subfamily. As to quaternary structure, monomer. Mg(2+) is required as a cofactor. Expressed in the nervous system, pharyngeal muscles and intestine (at protein level).

Its subcellular location is the cytoplasm. Its function is as follows. Hydrolyzes ATP, and can also hydrolyze GTP with lower efficiency. Has lower affinity for GTP. Plays a role in regulating starvation-induced thermotaxis responses in AFD thermosensory neurons. The polypeptide is Obg-like ATPase 1 (Caenorhabditis elegans).